We begin with the raw amino-acid sequence, 213 residues long: Peptidyl-tRNA hydrolase (213 aa).

Tyr-26 is a tRNA binding site. The Proton acceptor role is filled by His-31. Residues Tyr-78, Asn-80, and Asn-126 each coordinate tRNA.

It belongs to the PTH family. Monomer.

Its subcellular location is the cytoplasm. It catalyses the reaction an N-acyl-L-alpha-aminoacyl-tRNA + H2O = an N-acyl-L-amino acid + a tRNA + H(+). Its function is as follows. Hydrolyzes ribosome-free peptidyl-tRNAs (with 1 or more amino acids incorporated), which drop off the ribosome during protein synthesis, or as a result of ribosome stalling. Functionally, catalyzes the release of premature peptidyl moieties from peptidyl-tRNA molecules trapped in stalled 50S ribosomal subunits, and thus maintains levels of free tRNAs and 50S ribosomes. The sequence is that of Peptidyl-tRNA hydrolase from Trichormus variabilis (strain ATCC 29413 / PCC 7937) (Anabaena variabilis).